We begin with the raw amino-acid sequence, 454 residues long: Cobyrinate a,c-diamide synthase (454 aa).

The 197-residue stretch at 244–440 (RLGIAKDKAF…LHVHFYQNPK (197 aa)) folds into the GATase cobBQ-type domain. Cys-326 serves as the catalytic Nucleophile.

The protein belongs to the CobB/CbiA family. The cofactor is Mg(2+).

The enzyme catalyses cob(II)yrinate + 2 L-glutamine + 2 ATP + 2 H2O = cob(II)yrinate a,c diamide + 2 L-glutamate + 2 ADP + 2 phosphate + 2 H(+). It participates in cofactor biosynthesis; adenosylcobalamin biosynthesis; cob(II)yrinate a,c-diamide from sirohydrochlorin (anaerobic route): step 10/10. Its function is as follows. Catalyzes the ATP-dependent amidation of the two carboxylate groups at positions a and c of cobyrinate, using either L-glutamine or ammonia as the nitrogen source. This is Cobyrinate a,c-diamide synthase from Limosilactobacillus reuteri subsp. reuteri (strain JCM 1112) (Lactobacillus reuteri).